The sequence spans 234 residues: Large ribosomal subunit protein uL1 (234 aa).

This sequence belongs to the universal ribosomal protein uL1 family. As to quaternary structure, part of the 50S ribosomal subunit.

In terms of biological role, binds directly to 23S rRNA. The L1 stalk is quite mobile in the ribosome, and is involved in E site tRNA release. Protein L1 is also a translational repressor protein, it controls the translation of the L11 operon by binding to its mRNA. This Escherichia coli O127:H6 (strain E2348/69 / EPEC) protein is Large ribosomal subunit protein uL1.